A 271-amino-acid chain; its full sequence is Phosphate import ATP-binding protein PstB 1 (271 aa).

The ABC transporter domain maps to 24–266 (MIGKDVSVYY…PDDPRTQDYI (243 aa)). 56–63 (GPSGCGKS) contributes to the ATP binding site.

It belongs to the ABC transporter superfamily. Phosphate importer (TC 3.A.1.7) family. In terms of assembly, the complex is composed of two ATP-binding proteins (PstB), two transmembrane proteins (PstC and PstA) and a solute-binding protein (PstS).

The protein resides in the cell inner membrane. The enzyme catalyses phosphate(out) + ATP + H2O = ADP + 2 phosphate(in) + H(+). Part of the ABC transporter complex PstSACB involved in phosphate import. Responsible for energy coupling to the transport system. This is Phosphate import ATP-binding protein PstB 1 from Rhizobium johnstonii (strain DSM 114642 / LMG 32736 / 3841) (Rhizobium leguminosarum bv. viciae).